The sequence spans 468 residues: 6-phospho-beta-galactosidase (468 aa).

D-galactose 6-phosphate is bound by residues Gln19, His116, Asn159, Glu160, and Asn297. Residue Glu160 is the Proton donor of the active site. The active-site Nucleophile is the Glu375. Residues Ser428, Trp429, Lys435, and Tyr437 each coordinate D-galactose 6-phosphate.

The protein belongs to the glycosyl hydrolase 1 family.

The catalysed reaction is a 6-phospho-beta-D-galactoside + H2O = D-galactose 6-phosphate + an alcohol. Its pathway is carbohydrate metabolism; lactose degradation; D-galactose 6-phosphate and beta-D-glucose from lactose 6-phosphate: step 1/1. The protein is 6-phospho-beta-galactosidase of Streptococcus sanguinis (strain SK36).